A 462-amino-acid chain; its full sequence is Cysteine--tRNA ligase (462 aa).

C24 contributes to the Zn(2+) binding site. Residues 26-36 (PTVYDDAHLGH) carry the 'HIGH' region motif. Zn(2+)-binding residues include C199, H224, and E228. The short motif at 256 to 260 (KMSKS) is the 'KMSKS' region element. K259 provides a ligand contact to ATP.

Belongs to the class-I aminoacyl-tRNA synthetase family. Monomer. Zn(2+) serves as cofactor.

The protein localises to the cytoplasm. The enzyme catalyses tRNA(Cys) + L-cysteine + ATP = L-cysteinyl-tRNA(Cys) + AMP + diphosphate. The protein is Cysteine--tRNA ligase of Campylobacter jejuni subsp. jejuni serotype O:23/36 (strain 81-176).